A 517-amino-acid chain; its full sequence is GTPase Obg (517 aa).

Residues 2-159 (ATFVDTVTLH…GDVVLELKVV (158 aa)) enclose the Obg domain. Residues 160-336 (ADVALVGYPS…LSFALAELVK (177 aa)) enclose the OBG-type G domain. GTP is bound by residues 166–173 (GYPSAGKS), 191–195 (FTTLH), 212–215 (DVPG), 288–291 (NKID), and 317–319 (STV). Residues S173 and T193 each coordinate Mg(2+). An OCT domain is found at 355–439 (PRAVDEKPFT…GDGVVFDWEP (85 aa)). Positions 490–517 (EGEAGLWADEDGTGQDGTDEDATTDAKA) are disordered. Over residues 497-517 (ADEDGTGQDGTDEDATTDAKA) the composition is skewed to acidic residues.

Belongs to the TRAFAC class OBG-HflX-like GTPase superfamily. OBG GTPase family. In terms of assembly, monomer. Mg(2+) is required as a cofactor.

The protein localises to the cytoplasm. An essential GTPase which binds GTP, GDP and possibly (p)ppGpp with moderate affinity, with high nucleotide exchange rates and a fairly low GTP hydrolysis rate. Plays a role in control of the cell cycle, stress response, ribosome biogenesis and in those bacteria that undergo differentiation, in morphogenesis control. This is GTPase Obg from Clavibacter sepedonicus (Clavibacter michiganensis subsp. sepedonicus).